We begin with the raw amino-acid sequence, 179 residues long: MISRPESSLSGLESSQEVQKKTWNPRNYSARLTENIGLPLILLEKHNPWPAYVAYISPAVTRITEKGWARDLEYIYAAEKNGKPVKRSKHSAVLLKRRKPSKPSELMLKETLSETMLPTWECSTIYVSPTFVPEPAQLQMDVREGPTSNYNKIIFSKRPAMRKLPFGLLQASKEMHTKD.

Residues 1–15 (MISRPESSLSGLESS) show a composition bias toward low complexity. Positions 1–20 (MISRPESSLSGLESSQEVQK) are disordered.

This chain is CMT1A duplicated region transcript 4 protein homolog (Cdrt4), found in Mus musculus (Mouse).